The chain runs to 468 residues: GDNF family receptor alpha-1 (468 aa).

The signal sequence occupies residues 1–24 (MFLATLYFVLPLLDLLMSAEVSGG). 3 consecutive repeat copies span residues 25–113 (DRLD…LQGN), 150–238 (KGNN…YEER), and 239–342 (ERPN…KNAI). An intrachain disulfide couples Cys36 to Cys42. N-linked (GlcNAc...) asparagine glycosylation occurs at Asn59. Disulfide bonds link Cys154-Cys214, Cys161-Cys167, Cys178-Cys192, Cys187-Cys233, Cys216-Cys221, Cys243-Cys313, Cys250-Cys256, Cys267-Cys285, Cys277-Cys337, and Cys315-Cys325. Asn347 and Asn406 each carry an N-linked (GlcNAc...) asparagine glycan. Residue Ser430 is the site of GPI-anchor amidated serine attachment. Positions 431–468 (HITTKSMAAPPSCGLSSLPVMVFTALAALLSVSLAETS) are cleaved as a propeptide — removed in mature form.

The protein belongs to the GDNFR family. As to quaternary structure, interacts with GDNF ligand and RET: forms a 2:2:2 ternary complex composed of GDNF ligand, GFRA1 and RET receptor. Interacts with SORL1, either alone or in complex with GDNF. Interaction between SORL1 and GFRA1 leads to GFRA1 internalization, but not degradation. Expressed in the brain, in hippocampal neurons (at protein level). Isoform 1 and isoform 2 are expressed in heart, brain, lung, liver, kidney and testis.

Its subcellular location is the cell membrane. The protein resides in the golgi apparatus. It is found in the trans-Golgi network. The protein localises to the endosome. It localises to the multivesicular body. Coreceptor for GDNF, a neurotrophic factor that enhances survival and morphological differentiation of dopaminergic neurons and increases their high-affinity dopamine uptake. GDNF-binding leads to autophosphorylation and activation of the RET receptor. The chain is GDNF family receptor alpha-1 (Gfra1) from Mus musculus (Mouse).